The following is a 209-amino-acid chain: ATP-dependent Clp protease proteolytic subunit 2 (209 aa).

The active-site Nucleophile is Ser-107. Residue His-132 is part of the active site.

The protein belongs to the peptidase S14 family. As to quaternary structure, fourteen ClpP subunits assemble into 2 heptameric rings which stack back to back to give a disk-like structure with a central cavity, resembling the structure of eukaryotic proteasomes.

Its subcellular location is the cytoplasm. It carries out the reaction Hydrolysis of proteins to small peptides in the presence of ATP and magnesium. alpha-casein is the usual test substrate. In the absence of ATP, only oligopeptides shorter than five residues are hydrolyzed (such as succinyl-Leu-Tyr-|-NHMec, and Leu-Tyr-Leu-|-Tyr-Trp, in which cleavage of the -Tyr-|-Leu- and -Tyr-|-Trp bonds also occurs).. Functionally, cleaves peptides in various proteins in a process that requires ATP hydrolysis. Has a chymotrypsin-like activity. Plays a major role in the degradation of misfolded proteins. This is ATP-dependent Clp protease proteolytic subunit 2 from Corynebacterium jeikeium (strain K411).